The following is a 160-amino-acid chain: 3-hydroxyacyl-[acyl-carrier-protein] dehydratase FabZ (160 aa).

Residue His-59 is part of the active site.

Belongs to the thioester dehydratase family. FabZ subfamily.

The protein localises to the cytoplasm. It catalyses the reaction a (3R)-hydroxyacyl-[ACP] = a (2E)-enoyl-[ACP] + H2O. Functionally, involved in unsaturated fatty acids biosynthesis. Catalyzes the dehydration of short chain beta-hydroxyacyl-ACPs and long chain saturated and unsaturated beta-hydroxyacyl-ACPs. In Burkholderia thailandensis (strain ATCC 700388 / DSM 13276 / CCUG 48851 / CIP 106301 / E264), this protein is 3-hydroxyacyl-[acyl-carrier-protein] dehydratase FabZ.